Here is a 499-residue protein sequence, read N- to C-terminus: Neuropeptide CCHamide-1 receptor (499 aa).

Over 1 to 85 the chain is Extracellular; the sequence is MIANLVSMET…GRRPETYIVP (85 aa). Residues N33 and N61 are each glycosylated (N-linked (GlcNAc...) asparagine). Residues 86-106 traverse the membrane as a helical segment; sequence ILFALIFVVGVLGNGTLIVVF. The Cytoplasmic portion of the chain corresponds to 107-117; the sequence is LSVRQMRNVPN. A helical membrane pass occupies residues 118-138; the sequence is TYILSLALADLLVIITTVPLA. Residues 139–162 are Extracellular-facing; it reads STVYTVEYWPYGSFLCSLSEFMKD. C154 and C240 are joined by a disulfide. Residues 163–183 traverse the membrane as a helical segment; sequence VSIGVSVFTLTALSGDRYFAI. Residues 184–203 lie on the Cytoplasmic side of the membrane; it reads VDPLRKFHAHGGGRRATRMT. The chain crosses the membrane as a helical span at residues 204–224; it reads LATAVSIWLLAILCGLPALIG. Topologically, residues 225–259 are extracellular; sequence SNLKHLGINEKSIVICYPYPEEWGINYAKSMVLLH. The chain crosses the membrane as a helical span at residues 260–280; the sequence is FLVYYAIPLVVIAVFYVLIAL. The Cytoplasmic portion of the chain corresponds to 281-309; that stretch reads HLMYSASVPGEIQGAVRQVRARRKVAVTV. The helical transmembrane segment at 310–330 threads the bilayer; it reads LAFVVIFGICFLPYHVFFLWF. Over 331–348 the chain is Extracellular; it reads YFWPTAQDDYNAFWHVLR. Residues 349–369 traverse the membrane as a helical segment; that stretch reads IVAYCMSFANSCANPVALYFV. The Cytoplasmic segment spans residues 370 to 499; it reads SGAFRKHFNR…PAKFQESLLN (130 aa).

The protein belongs to the G-protein coupled receptor 1 family. Low levels in larval brain and gut with higher levels in adult brain and gut. In the brain expression is widely distributed, including strong expression in the mushroom bodies. Expressed weakly in s-LNv (small ventral lateral neurons) and strongly in l-LNv (large ventral lateral neurons), but not in other clock neurons.

Its subcellular location is the cell membrane. In terms of biological role, receptor for the neuropeptide CCHamide-1. Plays a role in the modulation of starvation-induced olfactory behavior where starved flies show increased responsiveness to food odorants, repellants and pheromones. Contributes to regulation of sleep latency (the time required to fall asleep), amount of sleep and depth of sleep (arousability). Involved in modulation of PDP1 and PDF levels in s-LNv (small ventral lateral neurons) clock neurons in response to CCHa1 released by DN1a (anterior dorsal neurons 1) clock neurons, to regulate morning activity. In a subset of dopaminergic cells in the protocerebral anterior medial (PAM) cluster involved in suppressing arousability in response to CCHa1 secreted by gut enteroendocrine cells. The polypeptide is Neuropeptide CCHamide-1 receptor (Drosophila melanogaster (Fruit fly)).